The following is a 539-amino-acid chain: 3-methylmercaptopropionyl-CoA ligase (539 aa).

Residue Thr-185 coordinates Mg(2+). ATP is bound by residues His-231, Gly-303, His-324, Ala-325, and Ser-329. Glu-330 is a Mg(2+) binding site. ATP is bound by residues Gln-359, Asp-417, Arg-432, and Lys-523.

Belongs to the ATP-dependent AMP-binding enzyme family. Homodimer. Mg(2+) serves as cofactor.

The enzyme catalyses 3-(methylsulfanyl)propanoate + ATP + CoA = 3-(methylsulfanyl)propanoyl-CoA + AMP + diphosphate. The protein operates within lipid metabolism; fatty acid metabolism. Its activity is regulated as follows. Activated by LiCl and NH(4)Cl. Inhibited by dimethylsulfoniopropionate (DMSP). MMPA concentrations above 2 mM relieve the DMSP inhibition and 80% of activity is regained at an MMPA concentration of 8 mM. In terms of biological role, involved in the assimilation of dimethylsulphoniopropionate (DMSP), an important compound in the fixation of carbon in marine phytoplankton. Catalyzes the ATP-dependent ligation of methylmercaptopropionate (MMPA) and CoA to yield methylmercaptopropionate-CoA (MMPA-CoA). It is also active with short-chain-fatty-acid (carboxylic acids up to six carbons in length). This is 3-methylmercaptopropionyl-CoA ligase from Ruegeria pomeroyi (strain ATCC 700808 / DSM 15171 / DSS-3) (Silicibacter pomeroyi).